A 545-amino-acid chain; its full sequence is Glucose-6-phosphate isomerase (545 aa).

Residue Glu-351 is the Proton donor of the active site. Catalysis depends on residues His-382 and Lys-510.

This sequence belongs to the GPI family.

Its subcellular location is the cytoplasm. It catalyses the reaction alpha-D-glucose 6-phosphate = beta-D-fructose 6-phosphate. It participates in carbohydrate biosynthesis; gluconeogenesis. Its pathway is carbohydrate degradation; glycolysis; D-glyceraldehyde 3-phosphate and glycerone phosphate from D-glucose: step 2/4. Functionally, catalyzes the reversible isomerization of glucose-6-phosphate to fructose-6-phosphate. The protein is Glucose-6-phosphate isomerase of Shewanella putrefaciens (strain CN-32 / ATCC BAA-453).